A 77-amino-acid polypeptide reads, in one-letter code: Acyl carrier protein (77 aa).

A Carrier domain is found at 2 to 77 (SEKLQKIQAL…DAVAYIEERS (76 aa)). At S37 the chain carries O-(pantetheine 4'-phosphoryl)serine.

Belongs to the acyl carrier protein (ACP) family. Post-translationally, 4'-phosphopantetheine is transferred from CoA to a specific serine of apo-ACP by AcpS. This modification is essential for activity because fatty acids are bound in thioester linkage to the sulfhydryl of the prosthetic group.

It localises to the cytoplasm. The protein operates within lipid metabolism; fatty acid biosynthesis. In terms of biological role, carrier of the growing fatty acid chain in fatty acid biosynthesis. The chain is Acyl carrier protein from Desulforudis audaxviator (strain MP104C).